A 206-amino-acid chain; its full sequence is Cytochrome c biogenesis ATP-binding export protein CcmA (206 aa).

Residues 4-205 (LEGIDLTCIR…AGAAIQRLQL (202 aa)) form the ABC transporter domain. 36 to 43 (GPNGSGKT) is a binding site for ATP.

The protein belongs to the ABC transporter superfamily. CcmA exporter (TC 3.A.1.107) family. In terms of assembly, the complex is composed of two ATP-binding proteins (CcmA) and two transmembrane proteins (CcmB).

The protein localises to the cell inner membrane. The catalysed reaction is heme b(in) + ATP + H2O = heme b(out) + ADP + phosphate + H(+). Part of the ABC transporter complex CcmAB involved in the biogenesis of c-type cytochromes; once thought to export heme, this seems not to be the case, but its exact role is uncertain. Responsible for energy coupling to the transport system. The polypeptide is Cytochrome c biogenesis ATP-binding export protein CcmA (Nitrosospira multiformis (strain ATCC 25196 / NCIMB 11849 / C 71)).